The chain runs to 647 residues: Protein cueball (647 aa).

The N-terminal stretch at 1–22 is a signal peptide; sequence MLWCPSVLVPLIAVAACLPVLA. Residues 23-534 are Extracellular-facing; the sequence is IGTPLEWEFA…CMTPSPWTSN (512 aa). 2 N-linked (GlcNAc...) asparagine glycosylation sites follow: Asn-80 and Asn-106. LDL-receptor class B repeat units follow at residues 119–166, 167–211, and 212–257; these read RNLF…DVCR, RKLY…DQLS, and DRIF…TNDA. Asn-175 carries an N-linked (GlcNAc...) asparagine glycan. N-linked (GlcNAc...) asparagine glycosylation is present at Asn-316. 2 consecutive EGF-like domains span residues 365–401 and 436–473; these read DEKT…SRCE and EISK…ERCE. Intrachain disulfides connect Cys-376–Cys-389, Cys-391–Cys-400, Cys-440–Cys-450, Cys-444–Cys-461, and Cys-463–Cys-472. An N-linked (GlcNAc...) asparagine glycan is attached at Asn-475. A helical membrane pass occupies residues 535–555; the sequence is VIIVLVLGIVSCFFLVAVIVH. Over 556–647 the chain is Cytoplasmic; sequence GFRRLYKPKR…LIHNMDDDLY (92 aa).

The protein belongs to the cueball family.

Its subcellular location is the cell membrane. Has a role in spermatogenesis and oogenesis. The sequence is that of Protein cueball from Drosophila pseudoobscura pseudoobscura (Fruit fly).